The primary structure comprises 468 residues: Cyclin-T1.1 (468 aa).

The segment covering 336–354 (KERGVEEERRKRERDRMAG) has biased composition (basic and acidic residues). The disordered stretch occupies residues 336–468 (KERGVEEERR…DMDLEDGELE (133 aa)). Residues 387–402 (APPPIPPQLNFPPPPI) show a composition bias toward pro residues. Residues 458–468 (SDMDLEDGELE) are compositionally biased toward acidic residues.

This sequence belongs to the cyclin family. Cyclin C subfamily.

In terms of biological role, regulatory subunit of the cyclin-dependent kinase pair (CDK9/cyclin T) complex, also called positive transcription elongation factor B (P-TEFb), which is proposed to facilitate the transition from abortive to production elongation by phosphorylating the CTD (carboxy-terminal domain) of the large subunit of RNA polymerase II (RNAP II). The protein is Cyclin-T1.1 of Caenorhabditis elegans.